Here is a 408-residue protein sequence, read N- to C-terminus: UDP-N-acetylglucosamine--dolichyl-phosphate N-acetylglucosaminephosphotransferase (408 aa).

Residues 1 to 10 (MWAFPELPLP) lie on the Lumenal side of the membrane. A helical transmembrane segment spans residues 11–38 (LLVNLFGSLLGFVATVTLIPAFRSHFIA). The Cytoplasmic segment spans residues 39-58 (ARLCGQDLNKLSRQQIPESQ). Residues 44 to 46 (QDL) and glutamate 56 contribute to the UDP-N-acetyl-alpha-D-glucosamine site. A helical transmembrane segment spans residues 59 to 78 (GVICGAVFLIILFCFIPFPF). Over 79 to 91 (LNCFVEEQCKAFP) the chain is Lumenal. Residues 92 to 118 (HHEFVALIGALLAICCMIFLGFADDVL) traverse the membrane as a helical segment. Over 119–121 (NLR) the chain is Cytoplasmic. Residues 122–143 (WRHKLLLPTAASLPLLMVYFTN) traverse the membrane as a helical segment. Residue lysine 125 coordinates dolichyl phosphate. Topologically, residues 144–166 (FGNTTIVVPKPFRWILGLHLDLG) are lumenal. N-linked (GlcNAc...) asparagine glycosylation is present at asparagine 146. Residues 167–186 (ILYYVYMGLLAVFCTNAINI) traverse the membrane as a helical segment. 178–186 (VFCTNAINI) provides a ligand contact to dolichyl phosphate. Asparagine 185 is a binding site for Mg(2+). Over 187–192 (LAGING) the chain is Cytoplasmic. Residue asparagine 191 coordinates UDP-N-acetyl-alpha-D-glucosamine. The chain crosses the membrane as a helical span at residues 193 to 213 (LEAGQSLVISASIIVFNLVEL). Topologically, residues 214–218 (EGDYR) are lumenal. A helical membrane pass occupies residues 219–242 (DDHVFSLYFMIPFFFTTLGLLYHN). Residues 243-250 (WYPSQVFV) are Cytoplasmic-facing. A helical transmembrane segment spans residues 251–269 (GDTFCYFAGMTFAVVGILG). Position 252 (aspartate 252) interacts with Mg(2+). At 270-271 (HF) the chain is on the lumenal side. The chain crosses the membrane as a helical span at residues 272–293 (SKTMLLFFIPQVFNFLYSLPQL). Residues 294–375 (LHAIPCPRHR…LLLKIFGPIH (82 aa)) lie on the Cytoplasmic side of the membrane. 301–303 (RHR) contributes to the UDP-N-acetyl-alpha-D-glucosamine binding site. The chain crosses the membrane as a helical span at residues 376-400 (ERNLTLLLLLLQILSSAVTFSIRYQ). Over 401–408 (LVRLFYDV) the chain is Lumenal.

This sequence belongs to the glycosyltransferase 4 family. Homodimer. The cofactor is Mg(2+).

Its subcellular location is the endoplasmic reticulum membrane. The catalysed reaction is a di-trans,poly-cis-dolichyl phosphate + UDP-N-acetyl-alpha-D-glucosamine = an N-acetyl-alpha-D-glucosaminyl-diphospho-di-trans,poly-cis-dolichol + UMP. It participates in protein modification; protein glycosylation. Its activity is regulated as follows. Inhibited by natural nucleoside antibiotic tunicamycin, which acts as a structural analog and competitor of UDP-GlcNAc. Its function is as follows. UDP-N-acetylglucosamine--dolichyl-phosphate N-acetylglucosaminephosphotransferase that operates in the biosynthetic pathway of dolichol-linked oligosaccharides, the glycan precursors employed in protein asparagine (N)-glycosylation. The assembly of dolichol-linked oligosaccharides begins on the cytosolic side of the endoplasmic reticulum membrane and finishes in its lumen. The sequential addition of sugars to dolichol pyrophosphate produces dolichol-linked oligosaccharides containing fourteen sugars, including two GlcNAcs, nine mannoses and three glucoses. Once assembled, the oligosaccharide is transferred from the lipid to nascent proteins by oligosaccharyltransferases. Catalyzes the initial step of dolichol-linked oligosaccharide biosynthesis, transfering GlcNAc-1-P from cytosolic UDP-GlcNAc onto the carrier lipid dolichyl phosphate (P-dolichol), yielding GlcNAc-P-P-dolichol embedded in the cytoplasmic leaflet of the endoplasmic reticulum membrane. The chain is UDP-N-acetylglucosamine--dolichyl-phosphate N-acetylglucosaminephosphotransferase (DPAGT1) from Cricetulus griseus (Chinese hamster).